A 203-amino-acid polypeptide reads, in one-letter code: Recombination protein RecR (203 aa).

The C4-type zinc finger occupies 56–71 (CAVCGNVSDNERCRIC). The region spanning 79-179 (SVVCIVEEPK…TVTRIASGLP (101 aa)) is the Toprim domain.

The protein belongs to the RecR family.

Functionally, may play a role in DNA repair. It seems to be involved in an RecBC-independent recombinational process of DNA repair. It may act with RecF and RecO. This chain is Recombination protein RecR, found in Mycobacterium bovis (strain ATCC BAA-935 / AF2122/97).